Reading from the N-terminus, the 240-residue chain is Splicing factor U2AF 35 kDa subunit (240 aa).

Ala2 is modified (N-acetylalanine). The segment at 12–40 adopts a C3H1-type 1 zinc-finger fold; that stretch reads EKDKVNCSFYFKIGACRHGDRCSRLHNKP. An N6-methyllysine modification is found at Lys39. Phosphoserine is present on residues Ser61 and Ser145. The RRM domain maps to 65–147; that stretch reads LRCAVSDVEM…QPIHAELSPV (83 aa). A C3H1-type 2 zinc finger spans residues 149 to 176; sequence DFREACCRQYEMGECTRGGFCNFMHLKP. An Omega-N-methylarginine modification is found at Arg165. Residues 183–240 are disordered; the sequence is RELYGRRRKKHRSRSRSRERRSRSRDRGRGGGGGGGGGGGGRERDRRRSRDRERSGRF. Residues 188 to 208 are compositionally biased toward basic residues; that stretch reads RRRKKHRSRSRSRERRSRSRD. Gly residues predominate over residues 212–222; that stretch reads GGGGGGGGGGG. Residues 223-240 are compositionally biased toward basic and acidic residues; sequence GRERDRRRSRDRERSGRF.

Belongs to the splicing factor SR family. Identified in the spliceosome C complex. Heterodimer with U2AF2. Interacts (via RS domain) with PHF5A (via N-terminus). Interacts with ZRANB2. Interacts with SDE2. Interacts with SF3B1.

The protein localises to the nucleus. It is found in the nucleus speckle. Plays a critical role in both constitutive and enhancer-dependent splicing by mediating protein-protein interactions and protein-RNA interactions required for accurate 3'-splice site selection. Recruits U2 snRNP to the branch point. Directly mediates interactions between U2AF2 and proteins bound to the enhancers and thus may function as a bridge between U2AF2 and the enhancer complex to recruit it to the adjacent intron. The sequence is that of Splicing factor U2AF 35 kDa subunit (U2AF1) from Homo sapiens (Human).